The following is a 168-amino-acid chain: tRNA-splicing endonuclease (168 aa).

Catalysis depends on residues Tyr-107, His-114, and Lys-145.

The protein belongs to the tRNA-intron endonuclease family. Archaeal short subfamily. In terms of assembly, homotetramer; although the tetramer contains four active sites, only two participate in the cleavage. Therefore, it should be considered as a dimer of dimers.

It catalyses the reaction pretRNA = a 3'-half-tRNA molecule with a 5'-OH end + a 5'-half-tRNA molecule with a 2',3'-cyclic phosphate end + an intron with a 2',3'-cyclic phosphate and a 5'-hydroxyl terminus.. Endonuclease that removes tRNA introns. Cleaves pre-tRNA at the 5'- and 3'-splice sites to release the intron. The products are an intron and two tRNA half-molecules bearing 2',3' cyclic phosphate and 5'-OH termini. Recognizes a pseudosymmetric substrate in which 2 bulged loops of 3 bases are separated by a stem of 4 bp. This chain is tRNA-splicing endonuclease, found in Thermococcus kodakarensis (strain ATCC BAA-918 / JCM 12380 / KOD1) (Pyrococcus kodakaraensis (strain KOD1)).